Consider the following 208-residue polypeptide: Small ribosomal subunit protein uS4 (208 aa).

In terms of domain architecture, S4 RNA-binding spans 97–158 (TRLDNVIYRM…RAQKYLCVQE (62 aa)).

Belongs to the universal ribosomal protein uS4 family. Part of the 30S ribosomal subunit. Contacts protein S5. The interaction surface between S4 and S5 is involved in control of translational fidelity.

Functionally, one of the primary rRNA binding proteins, it binds directly to 16S rRNA where it nucleates assembly of the body of the 30S subunit. With S5 and S12 plays an important role in translational accuracy. The sequence is that of Small ribosomal subunit protein uS4 from Xylella fastidiosa (strain M12).